The primary structure comprises 255 residues: Wtf element wtf15 (255 aa).

Positions 19-78 (KAGHEIDLEGSPPSEHNSEEKSTLPSNSDILTSANPVSQASETPDHSIESNTGSTQSPTS) are disordered. Polar residues-rich tracts occupy residues 41-60 (TLPSNSDILTSANPVSQASE) and 67-78 (ESNTGSTQSPTS). 3 helical membrane passes run 85 to 105 (FSFCIVYYFYFAIVVLGCVLP), 112 to 132 (FLIAFLVIFGIISVILFSGSI), and 162 to 182 (FLKTFVFYGLLKTIEHFLVLL).

Belongs to the WTF family.

It is found in the spore membrane. May act in meiotic drive. This chain is Wtf element wtf15, found in Schizosaccharomyces kambucha (Fission yeast).